The primary structure comprises 178 residues: Large ribosomal subunit protein uL6 (178 aa).

Belongs to the universal ribosomal protein uL6 family. As to quaternary structure, part of the 50S ribosomal subunit.

This protein binds to the 23S rRNA, and is important in its secondary structure. It is located near the subunit interface in the base of the L7/L12 stalk, and near the tRNA binding site of the peptidyltransferase center. This is Large ribosomal subunit protein uL6 from Nitratiruptor sp. (strain SB155-2).